The primary structure comprises 564 residues: Putative zinc metalloproteinase in scaA 5'region (564 aa).

Residues 1–564 (MTRLQDDFYD…KEADFSAEEF (564 aa)) enclose the Peptidase M13 domain. Histidine 478 is a Zn(2+) binding site. Residue glutamate 479 is part of the active site. Positions 482 and 538 each coordinate Zn(2+). The active-site Proton donor is aspartate 542.

It belongs to the peptidase M13 family. It depends on Zn(2+) as a cofactor.

The protein is Putative zinc metalloproteinase in scaA 5'region of Streptococcus gordonii (strain Challis / ATCC 35105 / BCRC 15272 / CH1 / DL1 / V288).